Here is a 534-residue protein sequence, read N- to C-terminus: Thromboxane-A synthase (534 aa).

Topologically, residues 1 to 10 are cytoplasmic; that stretch reads MEVLGFLSPE. Residues 11 to 31 form a helical membrane-spanning segment; sequence LNGPMVTMALAVVLLALLKWY. The Lumenal portion of the chain corresponds to 32-75; that stretch reads STSAFSRLEKLGIRHPKPSPFIGNLTFFRQGFWESHMELRKQYG. The chain crosses the membrane as a helical span at residues 76 to 96; that stretch reads PLSGYYLGRRMIVVISDPDMI. Topologically, residues 97–223 are cytoplasmic; it reads KQVLAEKFSN…RRFFAFSVPR (127 aa). A helical transmembrane segment spans residues 224 to 244; sequence LILVLILSFPSIMVPLARILP. Over 245-336 the chain is Lumenal; the sequence is NKKRDEVNGF…LTVDEVVGQA (92 aa). The chain crosses the membrane as a helical span at residues 337-357; sequence FLFLIAGYEIITNTLSFVTYL. The Cytoplasmic segment spans residues 358 to 534; it reads LATNPDCQEK…NGVYIRIVPR (177 aa). Residue Cys-480 coordinates heme.

This sequence belongs to the cytochrome P450 family. In terms of assembly, monomer. Requires heme as cofactor. As to expression, expressed in lung, kidney and thymus.

It localises to the endoplasmic reticulum membrane. The enzyme catalyses prostaglandin H2 = thromboxane A2. It carries out the reaction prostaglandin H2 = (12S)-hydroxy-(5Z,8E,10E)-heptadecatrienoate + malonaldehyde. The catalysed reaction is a hydroperoxyeicosatetraenoate = an oxoeicosatetraenoate + H2O. It catalyses the reaction (15S)-hydroperoxy-(5Z,8Z,11Z,13E)-eicosatetraenoate = 15-oxo-(5Z,8Z,11Z,13E)-eicosatetraenoate + H2O. The enzyme catalyses (15S)-hydroperoxy-(5Z,8Z,11Z,13E)-eicosatetraenoate + AH2 = (15S)-hydroxy-(5Z,8Z,11Z,13E)-eicosatetraenoate + A + H2O. Catalyzes the conversion of prostaglandin H2 (PGH2) to thromboxane A2 (TXA2), a potent inducer of blood vessel constriction and platelet aggregation. Also cleaves PGH2 to 12-hydroxy-heptadecatrienoicacid (12-HHT) and malondialdehyde, which is known to act as a mediator of DNA damage. 12-HHT and malondialdehyde are formed stoichiometrically in the same amounts as TXA2. Additionally, displays dehydratase activity, toward (15S)-hydroperoxy-(5Z,8Z,11Z,13E)-eicosatetraenoate (15(S)-HPETE) producing 15-KETE and 15-HETE. This is Thromboxane-A synthase (TBXAS1) from Sus scrofa (Pig).